A 684-amino-acid polypeptide reads, in one-letter code: Zinc finger BED domain-containing protein RICESLEEPER 4 (684 aa).

The BED-type zinc finger occupies 54–113 (KRKSAIWEHFTLVDVSDGCKRASCIHCNQSLAYSSGSKNSGTSHLTRHIAEWCRVLKDRQ). Residues Cys77, Cys80, His101, and Cys106 each coordinate Zn(2+). Positions 595-680 (ELELYLEEAL…EALLCAKDWL (86 aa)) are HATC (Hobo-Ac-Tam3) domain.

Homodimer.

It localises to the nucleus. In terms of biological role, transposase-like protein that is essential for plant growth and development. May regulate global gene expression by recruiting other cellular factors. This chain is Zinc finger BED domain-containing protein RICESLEEPER 4, found in Oryza sativa subsp. japonica (Rice).